The primary structure comprises 661 residues: DNA-directed RNA polymerase subunit beta' (661 aa).

Zn(2+)-binding residues include cysteine 69, cysteine 71, cysteine 87, and cysteine 90. 3 residues coordinate Mg(2+): aspartate 489, aspartate 491, and aspartate 493.

This sequence belongs to the RNA polymerase beta' chain family. RpoC1 subfamily. In plastids the minimal PEP RNA polymerase catalytic core is composed of four subunits: alpha, beta, beta', and beta''. When a (nuclear-encoded) sigma factor is associated with the core the holoenzyme is formed, which can initiate transcription. Mg(2+) serves as cofactor. Requires Zn(2+) as cofactor.

It localises to the plastid. The protein localises to the chloroplast. The enzyme catalyses RNA(n) + a ribonucleoside 5'-triphosphate = RNA(n+1) + diphosphate. Its function is as follows. DNA-dependent RNA polymerase catalyzes the transcription of DNA into RNA using the four ribonucleoside triphosphates as substrates. The chain is DNA-directed RNA polymerase subunit beta' from Chaetosphaeridium globosum (Charophycean green alga).